Consider the following 34-residue polypeptide: Photosystem II reaction center protein M (34 aa).

A helical transmembrane segment spans residues 5 to 25 (ILAFIATALFILIPTAFSLIL).

It belongs to the PsbM family. In terms of assembly, PSII is composed of 1 copy each of membrane proteins PsbA, PsbB, PsbC, PsbD, PsbE, PsbF, PsbH, PsbI, PsbJ, PsbK, PsbL, PsbM, PsbT, PsbX, PsbY, PsbZ, Psb30/Ycf12, at least 3 peripheral proteins of the oxygen-evolving complex and a large number of cofactors. It forms dimeric complexes.

Its subcellular location is the plastid. The protein resides in the chloroplast thylakoid membrane. One of the components of the core complex of photosystem II (PSII). PSII is a light-driven water:plastoquinone oxidoreductase that uses light energy to abstract electrons from H(2)O, generating O(2) and a proton gradient subsequently used for ATP formation. It consists of a core antenna complex that captures photons, and an electron transfer chain that converts photonic excitation into a charge separation. This subunit is found at the monomer-monomer interface. In Huperzia lucidula (Shining clubmoss), this protein is Photosystem II reaction center protein M.